Reading from the N-terminus, the 853-residue chain is E3 ubiquitin-protein ligase ZNRF3 (853 aa).

The first 28 residues, 1 to 28 (MKEPRIRGGLPLVWLWVLLAVAPGESLA), serve as a signal peptide directing secretion. Topologically, residues 29 to 192 (KETAFVEVVL…PRQPTEYFDM (164 aa)) are extracellular. A helical transmembrane segment spans residues 193–213 (GIFLAFFVVVSLVCLILLIKI). Topologically, residues 214–853 (KLKQRRSQNS…GQDCHPTDRD (640 aa)) are cytoplasmic. The RING-type; atypical zinc finger occupies 266-307 (CAICLEKYIDGEELRVIPCTHRFHKRCVDPWLLQNHTCPHCR). 4 disordered regions span residues 583–629 (SRSP…RLSS), 650–673 (SSGT…RGPE), 685–713 (GDPS…GGLY), and 834–853 (TGKE…TDRD). Residues 589–607 (TGGGDAPGCGGEGGTGSGR) are compositionally biased toward gly residues. A compositionally biased stretch (polar residues) spans 615–629 (HQTFPNSPSRDRLSS).

The protein belongs to the ZNRF3 family.

It localises to the cell membrane. The catalysed reaction is S-ubiquitinyl-[E2 ubiquitin-conjugating enzyme]-L-cysteine + [acceptor protein]-L-lysine = [E2 ubiquitin-conjugating enzyme]-L-cysteine + N(6)-ubiquitinyl-[acceptor protein]-L-lysine.. The protein operates within protein modification; protein ubiquitination. In terms of biological role, E3 ubiquitin-protein ligase that acts as a negative regulator of the Wnt signaling pathway by mediating the ubiquitination and subsequent degradation of Wnt receptor complex components. Along with RSPO2 and RNF43, constitutes a master switch that governs limb specification. This Xenopus tropicalis (Western clawed frog) protein is E3 ubiquitin-protein ligase ZNRF3 (znrf3).